A 508-amino-acid polypeptide reads, in one-letter code: Maturase K (508 aa).

It belongs to the intron maturase 2 family. MatK subfamily.

It localises to the plastid. Its subcellular location is the chloroplast. Functionally, usually encoded in the trnK tRNA gene intron. Probably assists in splicing its own and other chloroplast group II introns. This is Maturase K from Ranunculus lingua (Greater spearwort).